An 849-amino-acid chain; its full sequence is SMY2 homolog 2 (849 aa).

In terms of domain architecture, GYF spans 149-205; that stretch reads ESQWKYIDSNGNIQGPFGTNNMSQWYQGGYFTPTLQICRLATSPEPFGVNDRFIRLG. Disordered regions lie at residues 305–505, 527–547, 593–612, and 634–661; these read APLS…TTNL, DLKK…QLDR, TKIN…IKPD, and NRAS…NTSN. The segment covering 308 to 318 has biased composition (low complexity); the sequence is STTSSRSNKTT. Positions 319–331 are enriched in basic and acidic residues; the sequence is SSHEEKVPSHEEA. Thr-350 bears the Phosphothreonine mark. Composition is skewed to basic and acidic residues over residues 361–375, 387–403, and 425–443; these read TKQE…KEQN, VDRK…KSKD, and LLEE…EEQR. The stretch at 410–484 forms a coiled coil; that stretch reads EEQKRFAKAE…EKQKELLNNI (75 aa). The segment covering 444–455 has biased composition (basic residues); that stretch reads KLKKEKKLKQKQ. Basic and acidic residues predominate over residues 456–479; that stretch reads KKEEEKLKKKKKEEGKLEKEKQKE. The segment covering 483–505 has biased composition (polar residues); that stretch reads NILTGDTETPSSENTATSITTNL. Positions 594 to 605 are enriched in polar residues; that stretch reads KINSQSKINKAN. Positions 644 to 661 are enriched in low complexity; that stretch reads SRTPSPSSSALNSSNTSN.

The protein belongs to the SMY2/mpd2 family. Interacts with ribosomes. Interacts with EAP1 and MSL5 (via the GYP domain).

Its subcellular location is the cytoplasm. The sequence is that of SMY2 homolog 2 (SYH1) from Saccharomyces cerevisiae (strain ATCC 204508 / S288c) (Baker's yeast).